A 175-amino-acid chain; its full sequence is Transcriptional repressor NrdR (175 aa).

Residues 3 to 32 (CPYCSHPDSKVIDSRDVDDGVRRRRECVVC) fold into a zinc finger. Residues 47–137 (LFVVKKDQRR…VYREFTDITQ (91 aa)) form the ATP-cone domain.

Belongs to the NrdR family. Requires Zn(2+) as cofactor.

Negatively regulates transcription of bacterial ribonucleotide reductase nrd genes and operons by binding to NrdR-boxes. The chain is Transcriptional repressor NrdR from Dehalococcoides mccartyi (strain ATCC BAA-2100 / JCM 16839 / KCTC 5957 / BAV1).